The primary structure comprises 347 residues: MAEERHHTEHIPQWKKDEIENIKELIQSHKVFGMVGIEGILATKMQKIRRDLKDVAVLKVSRNTLTERALNQLGETIPGMKEYLDKQTALIFTNESPFKLYKLLEQTKTPSPIRGGAIAPADITVQKGPTSFPPGPILGELQSAGIPASIDAGKVAVKETKVVCKAGEVVPQKLATMLSKLEIYPLIVGLDLRAAYDDGTIYEPELLAVDESKYFSDIIRAAQNAFNLSVNTAFPTSATISTLLAKASSEAKNLGVNAVILEPGVMDTLLAKAHVQMTSVASEAADKDANAVDDDLREVLGAAASAAAAAAAAAPAEEEVKKEEEPEEEEEDHAEEDGMAGLGALFG.

Positions 312–347 (AAAPAEEEVKKEEEPEEEEEDHAEEDGMAGLGALFG) are disordered. Residues 325 to 338 (EPEEEEEDHAEEDG) are compositionally biased toward acidic residues.

The protein belongs to the universal ribosomal protein uL10 family. As to quaternary structure, part of the 50S ribosomal subunit. Forms part of the ribosomal stalk which helps the ribosome interact with GTP-bound translation factors. Forms a heptameric L10(L12)2(L12)2(L12)2 complex, where L10 forms an elongated spine to which the L12 dimers bind in a sequential fashion.

In terms of biological role, forms part of the ribosomal stalk, playing a central role in the interaction of the ribosome with GTP-bound translation factors. In Methanosarcina acetivorans (strain ATCC 35395 / DSM 2834 / JCM 12185 / C2A), this protein is Large ribosomal subunit protein uL10.